The sequence spans 575 residues: Transport inhibitor response 1-like protein Os04g0395600 (575 aa).

Positions methionine 1–valine 45 constitute an F-box domain. Position 69 (lysine 69) interacts with 1D-myo-inositol hexakisphosphate. The segment at aspartate 76–phenylalanine 77 is interaction with auxin-responsive proteins. 1D-myo-inositol hexakisphosphate contacts are provided by residues lysine 108–arginine 109 and arginine 340. Residues proline 343–valine 348 are interaction with auxin-responsive proteins. 1D-myo-inositol hexakisphosphate is bound at residue arginine 396–arginine 398. Positions cysteine 400–proline 404 are interaction with auxin-responsive proteins. Arginine 431 contributes to the 1D-myo-inositol hexakisphosphate binding site. Positions alanine 459–phenylalanine 460 are interaction with auxin-responsive proteins. 1D-myo-inositol hexakisphosphate contacts are provided by residues arginine 479–lysine 480 and arginine 504.

Part of a SCF (SKP1-cullin-F-box) protein ligase complex. May interact with auxin and auxin-responsive proteins.

It localises to the nucleus. It functions in the pathway protein modification; protein ubiquitination. The protein is Transport inhibitor response 1-like protein Os04g0395600 of Oryza sativa subsp. japonica (Rice).